The following is a 329-amino-acid chain: Short-chain dehydrogenase/reductase prx4 (329 aa).

The NADP(+) site is built by Ser-58, Ile-60, and Asn-81. N-linked (GlcNAc...) asparagine glycosylation is present at Asn-91. NADP(+) contacts are provided by Asp-98, Asn-121, Lys-161, Tyr-194, Lys-198, and Thr-229. Tyr-194 (proton acceptor) is an active-site residue. Catalysis depends on Lys-198, which acts as the Lowers pKa of active site Tyr. Residues 238 to 258 (GPLMAAGLPVSSAHMVGLAVV) traverse the membrane as a helical segment.

Belongs to the short-chain dehydrogenases/reductases (SDR) family.

It is found in the membrane. The protein operates within sesquiterpene biosynthesis. In terms of biological role, short-chain dehydrogenase/reductase; part of the gene cluster that mediates the biosynthesis of PR-toxin, a bicyclic sesquiterpene belonging to the eremophilane class and acting as a mycotoxin. The first step of the pathway is catalyzed by the aristolochene synthase which performs the cyclization of trans,trans-farnesyl diphosphate (FPP) to the bicyclic sesquiterpene aristolochene. Following the formation of aristolochene, the non-oxygenated aristolochene is converted to the trioxygenated intermediate eremofortin B, via 7-epi-neopetasone. This conversion appears to involve three enzymes, a hydroxysterol oxidase-like enzyme, the quinone-oxidase prx3 that forms the quinone-type-structure in the bicyclic nucleus of aristolochene with the C8-oxo group and the C-3 hydroxyl group, and the P450 monooxygenase ORF6 that introduces the epoxide at the double bond between carbons 1 and 2. No monoxy or dioxy-intermediates have been reported to be released to the broth, so these three early oxidative reactions may be coupled together. Eremofortin B is further oxidized by another P450 monooxygenase, that introduces a second epoxide between carbons 7 and 11 prior to acetylation to eremofortin A by the acetyltransferase ORF8. The second epoxidation may be performed by a second P450 monooxygenase. After the acetylation step, eremofortin A is converted to eremofortin C and then to PR-toxin. First the conversion of eremofortin A to eremofortin C proceeds by oxidation of the side chain of the molecule at C-12 and is catalyzed by the short-chain oxidoreductase prx1. The cytochrome P450 monooxygenase ORF6 is probably also involved in this step. The primary alcohol formed at C-12 is finally oxidized by the short-chain alcohol dehydrogenase prx4 that forms PR-toxin. In Penicillium roqueforti, this protein is Short-chain dehydrogenase/reductase prx4.